The primary structure comprises 1168 residues: Homeodomain-interacting protein kinase 2 (1168 aa).

A Phosphoserine modification is found at serine 16. Lysine 32 participates in a covalent cross-link: Glycyl lysine isopeptide (Lys-Gly) (interchain with G-Cter in SUMO); alternate. Lysine 32 participates in a covalent cross-link: Glycyl lysine isopeptide (Lys-Gly) (interchain with G-Cter in SUMO2); alternate. The segment at 97-230 (SASSTSVTGQ…TNEIVAIKIL (134 aa)) is transcriptional corepression. 2 positions are modified to phosphoserine: serine 118 and serine 135. Threonine 141 bears the Phosphothreonine mark. Positions 189 to 520 (HEVLCSMTNT…DADKRITPIE (332 aa)) are interaction with DAXX. Positions 199–527 (YEVLEFLGRG…PIETLNHPFV (329 aa)) constitute a Protein kinase domain. Residues 205 to 213 (LGRGTFGQV) and lysine 228 each bind ATP. Phosphothreonine occurs at positions 252 and 273. Residue aspartate 324 is the Proton acceptor of the active site. Position 361 is a phosphotyrosine (tyrosine 361). Residue serine 441 is modified to Phosphoserine. A phosphothreonine mark is found at threonine 482, threonine 517, and threonine 566. The interval 539–816 (THVKSCFQNM…KENTPPRCAM (278 aa)) is interaction with SKI and SMAD1. The tract at residues 595-772 (PSAASMAAVA…MRQQPTSTTS (178 aa)) is interaction with DAZAP2. 2 positions are modified to phosphoserine: serine 607 and serine 641. Position 660 is a phosphothreonine (threonine 660). Residues 724-869 (RNTHAHGSHY…ITISSDTDEE (146 aa)) are interaction with POU4F1. Positions 746 to 848 (HVTLPAAQPL…TRERQRQTIV (103 aa)) are interaction with CTBP1. The interval 759–869 (VAHVMRQQPT…ITISSDTDEE (111 aa)) is interaction with HMGA1. The segment at 764–820 (RQQPTSTTSSRKSKQHQPSMRNVSTCEVTSSQSTSSPQRSKRVKENTPPRCAMVHSS) is disordered. The segment covering 765–791 (QQPTSTTSSRKSKQHQPSMRNVSTCEV) has biased composition (polar residues). Residues 774-777 (RKSK) carry the Nuclear localization signal 1 (NLS1) motif. Residues serine 787 and serine 799 each carry the phosphoserine modification. Residues 792-801 (TSSQSTSSPQ) are compositionally biased toward low complexity. Positions 804–807 (KRVK) match the Nuclear localization signal 2 (NLS2) motif. Residues 812–907 (PRCAMVHSSP…YSDSSSNTSP (96 aa)) form an interaction with TP53 and TP73 region. The interval 845-879 (QTIVIPDTPSPTVSVITISSDTDEEEEQKHAPTST) is interaction with UBE2I. Residues 845 to 952 (QTIVIPDTPS…PLKTQASEVL (108 aa)) form a localization to nuclear speckles region. Residues 845 to 952 (QTIVIPDTPS…PLKTQASEVL (108 aa)) form a required for localization to nuclear speckles region. Residues 854-876 (SPTVSVITISSDTDEEEEQKHAP) are interaction with UBL1. Residues 856-880 (TVSVITISSDTDEEEEQKHAPTSTV) are SUMO interaction motifs (SIM); required for nuclear localization and kinase activity. The segment at 894 to 936 (HDSPYSDSSSNTSPYSVQQRTGHNGTNTLDTKGALENHCTGNP) is disordered. The span at 895 to 909 (DSPYSDSSSNTSPYS) shows a compositional bias: low complexity. Serine 906 is modified (phosphoserine). The segment at 907-1022 (PYSVQQRTGH…LSQAQPHMAT (116 aa)) is interaction with AXIN1. The segment covering 910-923 (VQQRTGHNGTNTLD) has biased composition (polar residues). Glycyl lysine isopeptide (Lys-Gly) (interchain with G-Cter in SUMO2) cross-links involve residues lysine 925 and lysine 945. The tract at residues 956 to 1168 (DSLGPAVSTG…PAKVNQYPYI (213 aa)) is autoinhibitory domain (AID). A disordered region spans residues 960–1030 (PAVSTGHHSS…ATDRTGSHRR (71 aa)). Serine 963 is modified (phosphoserine). Composition is skewed to low complexity over residues 965 to 991 (GHHSSSFKCKSSSTVTSTSGHSSGSSS) and 998 to 1018 (QQRPGPHFQQQQPLNLSQAQP). Phosphoserine is present on residues serine 1014, serine 1125, and serine 1158. Lysine 1161 participates in a covalent cross-link: Glycyl lysine isopeptide (Lys-Gly) (interchain with G-Cter in SUMO).

It belongs to the protein kinase superfamily. CMGC Ser/Thr protein kinase family. HIPK subfamily. In terms of assembly, interacts with CREB1, SIAH1, WSB1, CBX4, TRADD, p53/TP53, TP73, TP63, CREBBP, DAXX, P53DINP1, SKI, SMAD1, SMAD2 and SMAD3, but not SMAD4. Interacts with ATF1, PML, RUNX1, EP300, NKX1-2, NKX2-5, UBE2I, HMGA1, CTBP1, AXIN1, NLK, MYB, POU4F1, POU4F2, POU4F3, UBE2I, UBL1 and ZBTB4. Probably part of a complex consisting of p53/TP53, HIPK2 and AXIN1. Interacts with SP100; positively regulates TP53-dependent transcription. Interacts with DAZAP2; the interaction results in phosphorylation of DAZAP2 which causes localization of DAZAP2 to the nucleus, reduces interaction of DAZAP2 with HIPK2 and prevents DAZAP2-dependent degradation of HIPK2. Interacts with SIAH1; the interaction is promoted by DAZAP2 and results in SIAH1-mediated ubiquitination and subsequent proteasomal degradation of HIPK2. In terms of processing, autophosphorylation at Tyr-361 in the activation loop activates the kinase and promotes nuclear localization. Post-translationally, sumoylated. When conjugated it is directed to nuclear speckles. Desumoylated by SENP1. Sumoylation on Lys-32 is promoted by the E3 SUMO-protein ligase CBX4. Ubiquitinated by FBXO3, WSB1 and SIAH1, leading to rapid proteasome-dependent degradation. The degradation mediated by FBXO3, but not ubiquitination, is prevented in the presence of PML. The degradation mediated by WSB1 and SIAH1 is reversibly reduced upon DNA damage. In terms of processing, cleaved at Asp-895 and Asp-956 by CASP6 in a p53/TP53-dependent manner. The cleaved form lacks the autoinhibitory C-terminal domain (AID), resulting in a hyperactive kinase, which potentiates p53/TP53 Ser-46 phosphorylation and subsequent activation of the cell death machinery.

It localises to the nucleus. The protein resides in the PML body. The protein localises to the cytoplasm. The enzyme catalyses L-seryl-[protein] + ATP = O-phospho-L-seryl-[protein] + ADP + H(+). It carries out the reaction L-threonyl-[protein] + ATP = O-phospho-L-threonyl-[protein] + ADP + H(+). Its function is as follows. Serine/threonine-protein kinase involved in transcription regulation, p53/TP53-mediated cellular apoptosis and regulation of the cell cycle. Acts as a corepressor of several transcription factors, including SMAD1 and POU4F1/Brn3a and probably NK homeodomain transcription factors. Phosphorylates PDX1, ATF1, PML, p53/TP53, CREB1, CTBP1, CBX4, RUNX1, EP300, CTNNB1, HMGA1, ZBTB4 and DAZAP2. Inhibits cell growth and promotes apoptosis through the activation of p53/TP53 both at the transcription level and at the protein level (by phosphorylation and indirect acetylation). The phosphorylation of p53/TP53 may be mediated by a p53/TP53-HIPK2-AXIN1 complex. Involved in the response to hypoxia by acting as a transcriptional co-suppressor of HIF1A. Mediates transcriptional activation of TP73. In response to TGFB, cooperates with DAXX to activate JNK. Negative regulator through phosphorylation and subsequent proteasomal degradation of CTNNB1 and the antiapoptotic factor CTBP1. In the Wnt/beta-catenin signaling pathway acts as an intermediate kinase between MAP3K7/TAK1 and NLK to promote the proteasomal degradation of MYB. Phosphorylates CBX4 upon DNA damage and promotes its E3 SUMO-protein ligase activity. Activates CREB1 and ATF1 transcription factors by phosphorylation in response to genotoxic stress. In response to DNA damage, stabilizes PML by phosphorylation. PML, HIPK2 and FBXO3 may act synergically to activate p53/TP53-dependent transactivation. Promotes angiogenesis, and is involved in erythroid differentiation, especially during fetal liver erythropoiesis. Phosphorylation of RUNX1 and EP300 stimulates EP300 transcription regulation activity. Triggers ZBTB4 protein degradation in response to DNA damage. In response to DNA damage, phosphorylates DAZAP2 which localizes DAZAP2 to the nucleus, reduces interaction of DAZAP2 with HIPK2 and prevents DAZAP2-dependent ubiquitination of HIPK2 by E3 ubiquitin-protein ligase SIAH1 and subsequent proteasomal degradation. Modulates HMGA1 DNA-binding affinity. In response to high glucose, triggers phosphorylation-mediated subnuclear localization shifting of PDX1. Involved in the regulation of eye size, lens formation and retinal lamination during late embryogenesis. This Mesocricetus auratus (Golden hamster) protein is Homeodomain-interacting protein kinase 2 (Hipk2).